The primary structure comprises 157 residues: Transcription elongation factor GreA (157 aa).

The stretch at 13 to 75 forms a coiled coil; it reads RARLEAELEE…EIKSILARAQ (63 aa). Positions 113–142 are disordered; that stretch reads EAKPSEGKISNESPIGSALLGKRPRQKVTV.

Belongs to the GreA/GreB family.

In terms of biological role, necessary for efficient RNA polymerase transcription elongation past template-encoded arresting sites. The arresting sites in DNA have the property of trapping a certain fraction of elongating RNA polymerases that pass through, resulting in locked ternary complexes. Cleavage of the nascent transcript by cleavage factors such as GreA or GreB allows the resumption of elongation from the new 3'terminus. GreA releases sequences of 2 to 3 nucleotides. This chain is Transcription elongation factor GreA, found in Roseiflexus sp. (strain RS-1).